Reading from the N-terminus, the 209-residue chain is Large ribosomal subunit protein uL3 (209 aa).

A disordered region spans residues 127 to 151; sequence SGGPSSHGSKFHRHLGGTGQATTPA.

This sequence belongs to the universal ribosomal protein uL3 family. In terms of assembly, part of the 50S ribosomal subunit. Forms a cluster with proteins L14 and L19.

One of the primary rRNA binding proteins, it binds directly near the 3'-end of the 23S rRNA, where it nucleates assembly of the 50S subunit. This chain is Large ribosomal subunit protein uL3, found in Borrelia duttonii (strain Ly).